Reading from the N-terminus, the 351-residue chain is MTTVEMGIPTVRRSVSLAGRPDVDHLVDRFGRVARDLRVSITEKCSLRCTYCMPEEGLPAIPAQNLLTASEIVRLVDIAVHRLGVREVRFTGGEPLMRVDLEQMIAGCAERVPGVPLAMTTNAVGLEHRADGLARAGLTRVNVSLDSVDREHFARLTRRDRLPSVMAGIRAAARAGLAPMKINAVLMPETLSGAADLLEWCLREGVTLRFIEEMPLDADHEWARENMVTADRLLAVLGERFTLTEHGREDPSAPAEEWLVDGGPATVGIIASVTRSFCSDCDRTRLTAEGTVRSCLFSDQEIDLRSALRSGADDEELAQLWRGAMWNKWAGHGINADGFAPPQRSMGAIGG.

The Radical SAM core domain maps to 29–254 (RFGRVARDLR…EHGREDPSAP (226 aa)). Residue Arg-38 coordinates GTP. Residues Cys-45 and Cys-49 each coordinate [4Fe-4S] cluster. An S-adenosyl-L-methionine-binding site is contributed by Tyr-51. Cys-52 is a binding site for [4Fe-4S] cluster. Arg-89 contributes to the GTP binding site. Gly-93 is a binding site for S-adenosyl-L-methionine. Thr-120 contacts GTP. Ser-144 contacts S-adenosyl-L-methionine. Position 181 (Lys-181) interacts with GTP. Met-214 provides a ligand contact to S-adenosyl-L-methionine. The [4Fe-4S] cluster site is built by Cys-278 and Cys-281. GTP is bound at residue 283-285 (RTR). [4Fe-4S] cluster is bound at residue Cys-295.

The protein belongs to the radical SAM superfamily. MoaA family. As to quaternary structure, monomer and homodimer. The cofactor is [4Fe-4S] cluster.

The catalysed reaction is GTP + AH2 + S-adenosyl-L-methionine = (8S)-3',8-cyclo-7,8-dihydroguanosine 5'-triphosphate + 5'-deoxyadenosine + L-methionine + A + H(+). The protein operates within cofactor biosynthesis; molybdopterin biosynthesis. Its function is as follows. Catalyzes the cyclization of GTP to (8S)-3',8-cyclo-7,8-dihydroguanosine 5'-triphosphate. This Rhodococcus opacus (strain B4) protein is GTP 3',8-cyclase.